A 141-amino-acid polypeptide reads, in one-letter code: Large ribosomal subunit protein uL11 (141 aa).

The protein belongs to the universal ribosomal protein uL11 family. Part of the ribosomal stalk of the 50S ribosomal subunit. Interacts with L10 and the large rRNA to form the base of the stalk. L10 forms an elongated spine to which L12 dimers bind in a sequential fashion forming a multimeric L10(L12)X complex. One or more lysine residues are methylated.

Forms part of the ribosomal stalk which helps the ribosome interact with GTP-bound translation factors. In Prochlorococcus marinus (strain NATL1A), this protein is Large ribosomal subunit protein uL11.